Reading from the N-terminus, the 416-residue chain is Serine/threonine transporter SstT (416 aa).

The next 9 membrane-spanning stretches (helical) occupy residues 14 to 34 (GSIVLQIMFGLVAGMALALLS), 43 to 63 (FLGTLFVKALKGVAPVLVFVL), 82 to 102 (VLVLYLVGTFLAALVGVVASF), 141 to 161 (ALATGNFIGILAWAAALGVAL), 192 to 212 (IGVFGLVADAIATTGFSALMG), 220 to 240 (LLGSMLFIALVVNPLIVFLAI), 298 to 318 (MAGAAITISVLSLAAVHTLGV), 339 to 359 (ASGVAGGSLLLIPLACSLFGI), and 363 to 383 (VAMQMVAVGFIIGVIQDSAET).

It belongs to the dicarboxylate/amino acid:cation symporter (DAACS) (TC 2.A.23) family.

It is found in the cell inner membrane. The catalysed reaction is L-serine(in) + Na(+)(in) = L-serine(out) + Na(+)(out). It catalyses the reaction L-threonine(in) + Na(+)(in) = L-threonine(out) + Na(+)(out). Involved in the import of serine and threonine into the cell, with the concomitant import of sodium (symport system). This is Serine/threonine transporter SstT from Laribacter hongkongensis (strain HLHK9).